The sequence spans 431 residues: Serine/threonine-protein kinase Sgk1 (431 aa).

The necessary for localization to the mitochondria stretch occupies residues 1–60 (MTVKTEAARDTLTYSRMRGMVAILIAFMKQRRMGLNDFIQKIANNSYACKHPEVQSILKI). Positions 64 to 92 (QEPELMNANPSPPPSPSQQINLGPSSNPH) are disordered. Ser74 carries the phosphoserine modification. Ser78 is modified (phosphoserine; by MAPK7). The segment covering 81-91 (QQINLGPSSNP) has biased composition (polar residues). One can recognise a Protein kinase domain in the interval 98-355 (FHFLKVIGKG…FMEIKNHVFF (258 aa)). ATP-binding positions include 104–112 (IGKGSFGKV) and Lys127. The short motif at 131 to 141 (KKAILKKKEEK) is the Nuclear localization signal element. Asp222 serves as the catalytic Proton acceptor. Thr256 is modified (phosphothreonine; by PDPK1). Residues 356–431 (SLINWEDLIN…SYAPPMDSFL (76 aa)) enclose the AGC-kinase C-terminal domain. A Phosphothreonine; by PKA modification is found at Thr369. Phosphoserine is present on residues Ser397, Ser401, and Ser422.

It belongs to the protein kinase superfamily. AGC Ser/Thr protein kinase family. In terms of assembly, homodimer; disulfide-linked. Forms a trimeric complex with FBXW7 and NOTCH1. Interacts with MAPK3/ERK1, MAPK1/ERK2, MAP2K1/MEK1, MAP2K2/MEK2, NEDD4, NEDD4L, MAPT/TAU, MAPK7, CREB1, SLC9A3R2/NHERF2 and KCNJ1/ROMK1. Associates with the mammalian target of rapamycin complex 2 (mTORC2) via an interaction with MAPKAP1/SIN1. In terms of processing, regulated by phosphorylation. Activated by phosphorylation on Ser-422 by mTORC2, transforming it into a substrate for PDPK1 which phosphorylates it on Thr-256. Phosphorylation on Ser-397 and Ser-401 are also essential for its activity. Phosphorylation on Ser-78 by MAPK7 is required for growth factor-induced cell cycle progression. Ubiquitinated by NEDD4L; which promotes proteasomal degradation. Ubiquitinated by SYVN1 at the endoplasmic reticulum; which promotes rapid proteasomal degradation and maintains a high turnover rate in resting cells.

The protein localises to the cytoplasm. It localises to the nucleus. Its subcellular location is the endoplasmic reticulum membrane. The protein resides in the cell membrane. It is found in the mitochondrion. The enzyme catalyses L-seryl-[protein] + ATP = O-phospho-L-seryl-[protein] + ADP + H(+). It carries out the reaction L-threonyl-[protein] + ATP = O-phospho-L-threonyl-[protein] + ADP + H(+). Two specific sites, one in the kinase domain (Thr-256) and the other in the C-terminal regulatory region (Ser-422), need to be phosphorylated for its full activation. Phosphorylation at Ser-397 and Ser-401 are also essential for its activity. Activated by WNK1, WNK2, WNK3 and WNK4; which promote phosphorylation by mTORC2. Serine/threonine-protein kinase which is involved in the regulation of a wide variety of ion channels, membrane transporters, cellular enzymes, transcription factors, neuronal excitability, cell growth, proliferation, survival, migration and apoptosis. Plays an important role in cellular stress response. Contributes to regulation of renal Na(+) retention, renal K(+) elimination, salt appetite, gastric acid secretion, intestinal Na(+)/H(+) exchange and nutrient transport, insulin-dependent salt sensitivity of blood pressure, salt sensitivity of peripheral glucose uptake, cardiac repolarization and memory consolidation. Up-regulates Na(+) channels: SCNN1A/ENAC, SCN5A and ASIC1/ACCN2, K(+) channels: KCNJ1/ROMK1, KCNA1-5, KCNQ1-5 and KCNE1, epithelial Ca(2+) channels: TRPV5 and TRPV6, chloride channels: BSND, CLCN2 and CFTR, glutamate transporters: SLC1A3/EAAT1, SLC1A2 /EAAT2, SLC1A1/EAAT3, SLC1A6/EAAT4 and SLC1A7/EAAT5, amino acid transporters: SLC1A5/ASCT2, SLC38A1/SN1 and SLC6A19, creatine transporter: SLC6A8, Na(+)/dicarboxylate cotransporter: SLC13A2/NADC1, Na(+)-dependent phosphate cotransporter: SLC34A2/NAPI-2B, glutamate receptor: GRIK2/GLUR6. Up-regulates carriers: SLC9A3/NHE3, SLC12A1/NKCC2, SLC12A3/NCC, SLC5A3/SMIT, SLC2A1/GLUT1, SLC5A1/SGLT1 and SLC15A2/PEPT2. Regulates enzymes: GSK3A/B, PMM2 and Na(+)/K(+) ATPase, and transcription factors: CTNNB1 and nuclear factor NF-kappa-B. Stimulates sodium transport into epithelial cells by enhancing the stability and expression of SCNN1A/ENAC. This is achieved by phosphorylating the NEDD4L ubiquitin E3 ligase, promoting its interaction with 14-3-3 proteins, thereby preventing it from binding to SCNN1A/ENAC and targeting it for degradation. Regulates store-operated Ca(+2) entry (SOCE) by stimulating ORAI1 and STIM1. Regulates KCNJ1/ROMK1 directly via its phosphorylation or indirectly via increased interaction with SLC9A3R2/NHERF2. Phosphorylates MDM2 and activates MDM2-dependent ubiquitination of p53/TP53. Phosphorylates MAPT/TAU and mediates microtubule depolymerization and neurite formation in hippocampal neurons. Phosphorylates SLC2A4/GLUT4 and up-regulates its activity. Phosphorylates APBB1/FE65 and promotes its localization to the nucleus. Phosphorylates MAPK1/ERK2 and activates it by enhancing its interaction with MAP2K1/MEK1 and MAP2K2/MEK2. Phosphorylates FBXW7 and plays an inhibitory role in the NOTCH1 signaling. Phosphorylates FOXO1 resulting in its relocalization from the nucleus to the cytoplasm. Phosphorylates FOXO3, promoting its exit from the nucleus and interference with FOXO3-dependent transcription. Phosphorylates BRAF and MAP3K3/MEKK3 and inhibits their activity. Phosphorylates SLC9A3/NHE3 in response to dexamethasone, resulting in its activation and increased localization at the cell membrane. Phosphorylates CREB1. Necessary for vascular remodeling during angiogenesis. This chain is Serine/threonine-protein kinase Sgk1 (SGK1), found in Bos taurus (Bovine).